The following is a 280-amino-acid chain: uncharacterized protein (280 aa).

Over residues 1–10 the composition is skewed to basic residues; that stretch reads MSSSIKKLKK. A disordered region spans residues 1–45; sequence MSSSIKKLKKDTKDTDKTPSKKIYQETHNSEDSEDSEDSDNENNT. Residues 11-31 are compositionally biased toward basic and acidic residues; it reads DTKDTDKTPSKKIYQETHNSE. Residues 32-41 are compositionally biased toward acidic residues; it reads DSEDSEDSDN.

This is an uncharacterized protein from Acanthamoeba polyphaga mimivirus (APMV).